We begin with the raw amino-acid sequence, 351 residues long: 3-dehydroquinate synthase (351 aa).

Residues 60–65 (DGEEYK), 94–98 (GVISD), 118–119 (TT), lysine 131, lysine 140, and 158–161 (FLKT) each bind NAD(+). The Zn(2+) site is built by glutamate 173, histidine 239, and histidine 256.

It belongs to the sugar phosphate cyclases superfamily. Dehydroquinate synthase family. Co(2+) is required as a cofactor. The cofactor is Zn(2+). NAD(+) serves as cofactor.

The protein localises to the cytoplasm. It catalyses the reaction 7-phospho-2-dehydro-3-deoxy-D-arabino-heptonate = 3-dehydroquinate + phosphate. Its pathway is metabolic intermediate biosynthesis; chorismate biosynthesis; chorismate from D-erythrose 4-phosphate and phosphoenolpyruvate: step 2/7. Functionally, catalyzes the conversion of 3-deoxy-D-arabino-heptulosonate 7-phosphate (DAHP) to dehydroquinate (DHQ). The sequence is that of 3-dehydroquinate synthase from Campylobacter jejuni subsp. jejuni serotype O:6 (strain 81116 / NCTC 11828).